Consider the following 203-residue polypeptide: Ribosomal RNA large subunit methyltransferase E (203 aa).

5 residues coordinate S-adenosyl-L-methionine: Gly-51, Trp-53, Asp-69, Asp-85, and Asp-108. The active-site Proton acceptor is the Lys-148.

Belongs to the class I-like SAM-binding methyltransferase superfamily. RNA methyltransferase RlmE family.

It is found in the cytoplasm. The enzyme catalyses uridine(2552) in 23S rRNA + S-adenosyl-L-methionine = 2'-O-methyluridine(2552) in 23S rRNA + S-adenosyl-L-homocysteine + H(+). In terms of biological role, specifically methylates the uridine in position 2552 of 23S rRNA at the 2'-O position of the ribose in the fully assembled 50S ribosomal subunit. The sequence is that of Ribosomal RNA large subunit methyltransferase E from Methanosphaerula palustris (strain ATCC BAA-1556 / DSM 19958 / E1-9c).